Reading from the N-terminus, the 201-residue chain is Holliday junction resolvase RecU (201 aa).

Mg(2+) is bound by residues T87, D89, E102, and Q121.

The protein belongs to the RecU family. The cofactor is Mg(2+).

Its subcellular location is the cytoplasm. The enzyme catalyses Endonucleolytic cleavage at a junction such as a reciprocal single-stranded crossover between two homologous DNA duplexes (Holliday junction).. Its function is as follows. Endonuclease that resolves Holliday junction intermediates in genetic recombination. Cleaves mobile four-strand junctions by introducing symmetrical nicks in paired strands. Promotes annealing of linear ssDNA with homologous dsDNA. Required for DNA repair, homologous recombination and chromosome segregation. This Listeria monocytogenes serotype 4b (strain F2365) protein is Holliday junction resolvase RecU.